Here is a 233-residue protein sequence, read N- to C-terminus: Probable transglycosylase IsaA (233 aa).

Residues 1–29 form the signal peptide; sequence MKKTIMASSLAVALGVTGYAAGTGHQAHA.

The protein belongs to the transglycosylase family. IsaA subfamily.

Its subcellular location is the secreted. Is able to cleave peptidoglycan. The chain is Probable transglycosylase IsaA (isaA) from Staphylococcus aureus (strain Mu3 / ATCC 700698).